A 1207-amino-acid chain; its full sequence is DNA-directed RNA polymerase subunit beta' (1207 aa).

Residues C60, C62, C75, and C78 each contribute to the Zn(2+) site. 3 residues coordinate Mg(2+): D450, D452, and D454. Residues C819, C893, C900, and C903 each coordinate Zn(2+).

This sequence belongs to the RNA polymerase beta' chain family. The RNAP catalytic core consists of 2 alpha, 1 beta, 1 beta' and 1 omega subunit. When a sigma factor is associated with the core the holoenzyme is formed, which can initiate transcription. It depends on Mg(2+) as a cofactor. Zn(2+) is required as a cofactor.

The catalysed reaction is RNA(n) + a ribonucleoside 5'-triphosphate = RNA(n+1) + diphosphate. Functionally, DNA-dependent RNA polymerase catalyzes the transcription of DNA into RNA using the four ribonucleoside triphosphates as substrates. In Streptococcus pyogenes serotype M3 (strain SSI-1), this protein is DNA-directed RNA polymerase subunit beta'.